A 492-amino-acid polypeptide reads, in one-letter code: MTFRGDTAVVVLAAGAGTRMRSDIPKVLHTLAGRSMLSHSLHAMAKLAPQHLVVVLGHCHERISPLVDELAESLGRTINVTLQDRPLGTGDAVRCGLSALPADYSGIVVVTAGDTPLLDAETLADLIETHSATSSAVTVLTTTLSDPHGYGRILRTQDNAVMAIVEQTDATPSQREIREVNAGVYAFEITALQSALSRLSSDNAQQELYLPDVIAILRRDGQTVSARHIDDSALVAGVNDRVQLAQLGAELNRRIVAAHQMAGVTVIDPATTWIDVDVAIGRDTVIQPGTQLLGHTQIGDRCEIGPDTTLTDVTVGDNASVVRTHGSSSSIGAAAAVGPFTFLRPGTVLGTGGKLGAFVETKNSTIGAGTKVPHLTYVGDADIGDDSNIGAGSVFVNYDGMTKNRATIGSHVRSGAGTRFVAPVNVGDGAYTGAGTVIRDDVPPGALAVSGGPQRNIEDWVQQKRPGTPSAEAARKASAEQSTPPPDADQTP.

The interval 1–241 (MTFRGDTAVV…SALVAGVNDR (241 aa)) is pyrophosphorylase. UDP-N-acetyl-alpha-D-glucosamine contacts are provided by residues 12 to 15 (LAAG), K26, Q83, and 88 to 89 (GT). D114 provides a ligand contact to Mg(2+). The UDP-N-acetyl-alpha-D-glucosamine site is built by G151, E166, N181, and N239. N239 contacts Mg(2+). The segment at 242 to 262 (VQLAQLGAELNRRIVAAHQMA) is linker. Residues 263 to 492 (GVTVIDPATT…TPPPDADQTP (230 aa)) form an N-acetyltransferase region. UDP-N-acetyl-alpha-D-glucosamine is bound by residues R344 and K362. H374 (proton acceptor) is an active-site residue. Y377 and N388 together coordinate UDP-N-acetyl-alpha-D-glucosamine. Residues A391, 397 to 398 (NY), and A434 each bind acetyl-CoA. The interval 451 to 492 (GGPQRNIEDWVQQKRPGTPSAEAARKASAEQSTPPPDADQTP) is disordered. Pro residues predominate over residues 483–492 (TPPPDADQTP).

The protein in the N-terminal section; belongs to the N-acetylglucosamine-1-phosphate uridyltransferase family. In the C-terminal section; belongs to the transferase hexapeptide repeat family. In terms of assembly, homotrimer. Mg(2+) serves as cofactor.

Its subcellular location is the cytoplasm. It carries out the reaction alpha-D-glucosamine 1-phosphate + acetyl-CoA = N-acetyl-alpha-D-glucosamine 1-phosphate + CoA + H(+). It catalyses the reaction N-acetyl-alpha-D-glucosamine 1-phosphate + UTP + H(+) = UDP-N-acetyl-alpha-D-glucosamine + diphosphate. It functions in the pathway nucleotide-sugar biosynthesis; UDP-N-acetyl-alpha-D-glucosamine biosynthesis; N-acetyl-alpha-D-glucosamine 1-phosphate from alpha-D-glucosamine 6-phosphate (route II): step 2/2. Its pathway is nucleotide-sugar biosynthesis; UDP-N-acetyl-alpha-D-glucosamine biosynthesis; UDP-N-acetyl-alpha-D-glucosamine from N-acetyl-alpha-D-glucosamine 1-phosphate: step 1/1. The protein operates within bacterial outer membrane biogenesis; LPS lipid A biosynthesis. Its function is as follows. Catalyzes the last two sequential reactions in the de novo biosynthetic pathway for UDP-N-acetylglucosamine (UDP-GlcNAc). The C-terminal domain catalyzes the transfer of acetyl group from acetyl coenzyme A to glucosamine-1-phosphate (GlcN-1-P) to produce N-acetylglucosamine-1-phosphate (GlcNAc-1-P), which is converted into UDP-GlcNAc by the transfer of uridine 5-monophosphate (from uridine 5-triphosphate), a reaction catalyzed by the N-terminal domain. This Mycobacterium marinum (strain ATCC BAA-535 / M) protein is Bifunctional protein GlmU.